We begin with the raw amino-acid sequence, 331 residues long: C4-dicarboxylate-binding periplasmic protein DctP (331 aa).

Residues 1–23 form the signal peptide; that stretch reads MLKHTAKALVCALSLTVAGIVQA.

It belongs to the bacterial solute-binding protein 7 family. As to quaternary structure, the complex comprises the extracytoplasmic solute receptor protein DctP, and the two transmembrane proteins DctQ and DctM.

It is found in the periplasm. Functionally, part of the tripartite ATP-independent periplasmic (TRAP) transport system DctPQM involved in C4-dicarboxylates uptake. This Pseudomonas aeruginosa (strain ATCC 15692 / DSM 22644 / CIP 104116 / JCM 14847 / LMG 12228 / 1C / PRS 101 / PAO1) protein is C4-dicarboxylate-binding periplasmic protein DctP.